The sequence spans 349 residues: Holliday junction branch migration complex subunit RuvB (349 aa).

Positions Met1–Tyr186 are large ATPase domain (RuvB-L). ATP-binding positions include Leu25, Arg26, Gly67, Lys70, Thr71, Ser72, Glu133 to Phe135, Arg176, Tyr186, and Arg223. Thr71 lines the Mg(2+) pocket. A small ATPAse domain (RuvB-S) region spans residues Glu187–Asp257. Residues Glu260–Ser349 are head domain (RuvB-H). DNA-binding residues include Arg315 and Arg320.

Belongs to the RuvB family. Homohexamer. Forms an RuvA(8)-RuvB(12)-Holliday junction (HJ) complex. HJ DNA is sandwiched between 2 RuvA tetramers; dsDNA enters through RuvA and exits via RuvB. An RuvB hexamer assembles on each DNA strand where it exits the tetramer. Each RuvB hexamer is contacted by two RuvA subunits (via domain III) on 2 adjacent RuvB subunits; this complex drives branch migration. In the full resolvosome a probable DNA-RuvA(4)-RuvB(12)-RuvC(2) complex forms which resolves the HJ.

The protein localises to the cytoplasm. The enzyme catalyses ATP + H2O = ADP + phosphate + H(+). Functionally, the RuvA-RuvB-RuvC complex processes Holliday junction (HJ) DNA during genetic recombination and DNA repair, while the RuvA-RuvB complex plays an important role in the rescue of blocked DNA replication forks via replication fork reversal (RFR). RuvA specifically binds to HJ cruciform DNA, conferring on it an open structure. The RuvB hexamer acts as an ATP-dependent pump, pulling dsDNA into and through the RuvAB complex. RuvB forms 2 homohexamers on either side of HJ DNA bound by 1 or 2 RuvA tetramers; 4 subunits per hexamer contact DNA at a time. Coordinated motions by a converter formed by DNA-disengaged RuvB subunits stimulates ATP hydrolysis and nucleotide exchange. Immobilization of the converter enables RuvB to convert the ATP-contained energy into a lever motion, pulling 2 nucleotides of DNA out of the RuvA tetramer per ATP hydrolyzed, thus driving DNA branch migration. The RuvB motors rotate together with the DNA substrate, which together with the progressing nucleotide cycle form the mechanistic basis for DNA recombination by continuous HJ branch migration. Branch migration allows RuvC to scan DNA until it finds its consensus sequence, where it cleaves and resolves cruciform DNA. This Mycobacterium leprae (strain Br4923) protein is Holliday junction branch migration complex subunit RuvB.